Consider the following 164-residue polypeptide: Phosphopantetheine adenylyltransferase (164 aa).

Position 9 (serine 9) interacts with substrate. ATP contacts are provided by residues 9–10 and histidine 17; that span reads SF. Residues lysine 41, valine 78, and arginine 92 each coordinate substrate. ATP-binding positions include 93–95, glutamate 103, and 128–134; these read GLR and VRTITAT.

Belongs to the bacterial CoaD family. As to quaternary structure, homohexamer. Mg(2+) serves as cofactor.

The protein localises to the cytoplasm. It carries out the reaction (R)-4'-phosphopantetheine + ATP + H(+) = 3'-dephospho-CoA + diphosphate. Its pathway is cofactor biosynthesis; coenzyme A biosynthesis; CoA from (R)-pantothenate: step 4/5. Reversibly transfers an adenylyl group from ATP to 4'-phosphopantetheine, yielding dephospho-CoA (dPCoA) and pyrophosphate. This chain is Phosphopantetheine adenylyltransferase, found in Brucella suis (strain ATCC 23445 / NCTC 10510).